Consider the following 549-residue polypeptide: Carboxylesterase 1C (549 aa).

The first 18 residues, 1-18, serve as a signal peptide directing secretion; sequence MWLCALVWASLAVCPIWG. N79 carries an N-linked (GlcNAc...) asparagine glycan. An intrachain disulfide couples C87 to C116. S221 functions as the Acyl-ester intermediate in the catalytic mechanism. C273 and C284 form a disulfide bridge. N274, N275, and N302 each carry an N-linked (GlcNAc...) asparagine glycan. Residue E340 is the Charge relay system of the active site. N375 is a glycosylation site (N-linked (GlcNAc...) asparagine). The active-site Charge relay system is H453. A Phosphoserine modification is found at S471. N476 is a glycosylation site (N-linked (GlcNAc...) asparagine). The Prevents secretion from ER motif lies at 546 to 549; that stretch reads TEHT.

The protein belongs to the type-B carboxylesterase/lipase family.

It is found in the endoplasmic reticulum lumen. It carries out the reaction a carboxylic ester + H2O = an alcohol + a carboxylate + H(+). Functionally, involved in the detoxification of xenobiotics and in the activation of ester and amide prodrugs. Involved in the extracellular metabolism of lung surfactant. This chain is Carboxylesterase 1C (Ces1c), found in Rattus norvegicus (Rat).